Reading from the N-terminus, the 132-residue chain is Small ribosomal subunit protein uS8 (132 aa).

This sequence belongs to the universal ribosomal protein uS8 family. As to quaternary structure, part of the 30S ribosomal subunit. Contacts proteins S5 and S12.

Functionally, one of the primary rRNA binding proteins, it binds directly to 16S rRNA central domain where it helps coordinate assembly of the platform of the 30S subunit. The chain is Small ribosomal subunit protein uS8 from Psychrobacter arcticus (strain DSM 17307 / VKM B-2377 / 273-4).